Reading from the N-terminus, the 555-residue chain is GMP synthase [glutamine-hydrolyzing] (555 aa).

In terms of domain architecture, Glutamine amidotransferase type-1 spans Lys8 to Gln234. Cys89 acts as the Nucleophile; for GATase activity in catalysis. 4 residues coordinate L-glutamine: Gln93, Asn169, Asp172, and His208. Residues His208 and Glu210 each act as for GATase activity in the active site. In terms of domain architecture, GMPS ATP-PPase spans Phe235–Arg430. Residue Ser262–Thr268 coordinates ATP. Residues Arg336, Gln476, Lys547, Ile552, and Glu553 each contribute to the XMP site.

Homodimer (via the GMPS ATP-PPase domain). It depends on Mg(2+) as a cofactor.

It carries out the reaction XMP + L-glutamine + ATP + H2O = GMP + L-glutamate + AMP + diphosphate + 2 H(+). The protein operates within purine metabolism; GMP biosynthesis; GMP from XMP (L-Gln route): step 1/1. The GATase domain is allosterically activated by the binding of substrates, ATP and XMP, to the ATPPase domain, thus ensuring that glutamine hydrolysis occurs only when the ATPPase domain is primed to receive ammonia. Inhibited by Na(+). Inhibited by the reaction product GMP. Its function is as follows. Catalyzes the conversion of xanthine monophosphate (XMP) to GMP in the presence of glutamine and ATP through an adenyl-XMP intermediate, which is the final step of de novo synthesis of GMP. The conversion of XMP to GMP involves the coordinated action of the glutamine amidotransferase (GATase) domain that catalyzes the hydrolysis of the amide side chain of glutamine producing ammonia and the ATP pyrophosphatase (ATPPase) domain that catalyzes the synthesis of adenyl-XMP intermediate from ATP. The ammonia produced by the GATase domain is tunnelled to the ATP-PPase domain where it attacks the adenyl-XMP intermediate generating GMP. This is GMP synthase [glutamine-hydrolyzing] from Plasmodium falciparum (isolate 3D7).